Reading from the N-terminus, the 374-residue chain is Type II methyltransferase M.BbvI (374 aa).

Residues 3–347 (FRKGELFCGP…EAVLKTFARI (345 aa)) form the SAM-dependent MTase C5-type domain. The active site involves Cys92.

Belongs to the class I-like SAM-binding methyltransferase superfamily. C5-methyltransferase family.

The catalysed reaction is a 2'-deoxycytidine in DNA + S-adenosyl-L-methionine = a 5-methyl-2'-deoxycytidine in DNA + S-adenosyl-L-homocysteine + H(+). A methylase, recognizes the double-stranded sequence 5'-GCAGC-3', methylates C-2 on both strands, and protects the DNA from cleavage by the BbvI endonuclease. This is Type II methyltransferase M.BbvI (bbvIM) from Brevibacillus brevis (Bacillus brevis).